A 363-amino-acid chain; its full sequence is Peptide chain release factor 2 (363 aa).

The residue at position 251 (Q251) is an N5-methylglutamine.

Belongs to the prokaryotic/mitochondrial release factor family. Methylated by PrmC. Methylation increases the termination efficiency of RF2.

The protein resides in the cytoplasm. Functionally, peptide chain release factor 2 directs the termination of translation in response to the peptide chain termination codons UGA and UAA. This Helicobacter pylori (strain HPAG1) protein is Peptide chain release factor 2.